Here is a 351-residue protein sequence, read N- to C-terminus: S-adenosylmethionine:tRNA ribosyltransferase-isomerase (351 aa).

It belongs to the QueA family. In terms of assembly, monomer.

The protein localises to the cytoplasm. The enzyme catalyses 7-aminomethyl-7-carbaguanosine(34) in tRNA + S-adenosyl-L-methionine = epoxyqueuosine(34) in tRNA + adenine + L-methionine + 2 H(+). The protein operates within tRNA modification; tRNA-queuosine biosynthesis. Functionally, transfers and isomerizes the ribose moiety from AdoMet to the 7-aminomethyl group of 7-deazaguanine (preQ1-tRNA) to give epoxyqueuosine (oQ-tRNA). The polypeptide is S-adenosylmethionine:tRNA ribosyltransferase-isomerase (Photobacterium profundum (strain SS9)).